A 152-amino-acid chain; its full sequence is UPF0266 membrane protein Ent638_2389 (152 aa).

The next 3 helical transmembrane spans lie at 6–26 (IVLVLFIVALLAYAFYDEFIM), 45–65 (VDAFIFAGLLAILIYNNVMSQ), and 67–87 (ALLTTWLLCVLALMAFYLFWI).

It belongs to the UPF0266 family.

It is found in the cell inner membrane. The chain is UPF0266 membrane protein Ent638_2389 from Enterobacter sp. (strain 638).